Consider the following 254-residue polypeptide: Triosephosphate isomerase (254 aa).

12 to 14 (NWK) provides a ligand contact to substrate. His99 acts as the Electrophile in catalysis. The active-site Proton acceptor is Glu169. Residues Gly175, Ser214, and 235 to 236 (GG) contribute to the substrate site.

The protein belongs to the triosephosphate isomerase family. In terms of assembly, homodimer.

It localises to the cytoplasm. The catalysed reaction is D-glyceraldehyde 3-phosphate = dihydroxyacetone phosphate. It functions in the pathway carbohydrate biosynthesis; gluconeogenesis. It participates in carbohydrate degradation; glycolysis; D-glyceraldehyde 3-phosphate from glycerone phosphate: step 1/1. Functionally, involved in the gluconeogenesis. Catalyzes stereospecifically the conversion of dihydroxyacetone phosphate (DHAP) to D-glyceraldehyde-3-phosphate (G3P). The sequence is that of Triosephosphate isomerase from Xanthobacter autotrophicus (strain ATCC BAA-1158 / Py2).